We begin with the raw amino-acid sequence, 77 residues long: NAD(P)H-quinone oxidoreductase subunit L (77 aa).

Transmembrane regions (helical) follow at residues 12–32 (LIAY…LLFY) and 47–67 (LGIY…SPFL).

It belongs to the complex I NdhL subunit family. As to quaternary structure, NDH-1 can be composed of about 15 different subunits; different subcomplexes with different compositions have been identified which probably have different functions.

It is found in the cellular thylakoid membrane. It catalyses the reaction a plastoquinone + NADH + (n+1) H(+)(in) = a plastoquinol + NAD(+) + n H(+)(out). The enzyme catalyses a plastoquinone + NADPH + (n+1) H(+)(in) = a plastoquinol + NADP(+) + n H(+)(out). NDH-1 shuttles electrons from an unknown electron donor, via FMN and iron-sulfur (Fe-S) centers, to quinones in the respiratory and/or the photosynthetic chain. The immediate electron acceptor for the enzyme in this species is believed to be plastoquinone. Couples the redox reaction to proton translocation, and thus conserves the redox energy in a proton gradient. Cyanobacterial NDH-1 also plays a role in inorganic carbon-concentration. The protein is NAD(P)H-quinone oxidoreductase subunit L of Prochlorococcus marinus (strain AS9601).